The sequence spans 142 residues: Large ribosomal subunit protein uL11 (142 aa).

It belongs to the universal ribosomal protein uL11 family. As to quaternary structure, part of the ribosomal stalk of the 50S ribosomal subunit. Interacts with L10 and the large rRNA to form the base of the stalk. L10 forms an elongated spine to which L12 dimers bind in a sequential fashion forming a multimeric L10(L12)X complex. One or more lysine residues are methylated.

Forms part of the ribosomal stalk which helps the ribosome interact with GTP-bound translation factors. This chain is Large ribosomal subunit protein uL11, found in Nitrobacter hamburgensis (strain DSM 10229 / NCIMB 13809 / X14).